A 188-amino-acid polypeptide reads, in one-letter code: MNITATVLLAFGMSMDAFAASVGKGATLHKPKFSEALRTGLIFGAVETLTPLIGWGMGMLASRFVLEWNHWIAFVLLIFLGGRMIIEGFRGADDEDEEPRRRHGFWLLVTTAIATSLDAMAVGVGLAFLQVNIIATALAIGCATLIMSTLGMMVGRFIGSIIGKKAEILGGLVLIGIGVQILWTHFHG.

The next 5 helical transmembrane spans lie at 3–23 (ITATVLLAFGMSMDAFAASVG), 66–86 (LEWNHWIAFVLLIFLGGRMII), 106–128 (WLLVTTAIATSLDAMAVGVGLAF), 143–163 (ATLIMSTLGMMVGRFIGSIIG), and 168–188 (ILGGLVLIGIGVQILWTHFHG).

This sequence belongs to the MntP (TC 9.B.29) family.

Its subcellular location is the cell inner membrane. In terms of biological role, probably functions as a manganese efflux pump. The sequence is that of Probable manganese efflux pump MntP from Shigella sonnei (strain Ss046).